The sequence spans 95 residues: Small ribosomal subunit protein bS6 (95 aa).

The protein belongs to the bacterial ribosomal protein bS6 family.

Binds together with bS18 to 16S ribosomal RNA. The sequence is that of Small ribosomal subunit protein bS6 from Desulforamulus reducens (strain ATCC BAA-1160 / DSM 100696 / MI-1) (Desulfotomaculum reducens).